Here is a 27-residue protein sequence, read N- to C-terminus: uncharacterized protein (27 aa).

It is found in the plastid. It localises to the chloroplast. This is an uncharacterized protein from Anthoceros angustus (Hornwort).